The sequence spans 226 residues: 7-cyano-7-deazaguanine synthase (226 aa).

10-20 (LSGGLDSATAA) contributes to the ATP binding site. Residues Cys-191, Cys-199, Cys-202, and Cys-205 each contribute to the Zn(2+) site.

This sequence belongs to the QueC family. It depends on Zn(2+) as a cofactor.

The catalysed reaction is 7-carboxy-7-deazaguanine + NH4(+) + ATP = 7-cyano-7-deazaguanine + ADP + phosphate + H2O + H(+). Its pathway is purine metabolism; 7-cyano-7-deazaguanine biosynthesis. Catalyzes the ATP-dependent conversion of 7-carboxy-7-deazaguanine (CDG) to 7-cyano-7-deazaguanine (preQ(0)). This is 7-cyano-7-deazaguanine synthase from Parasynechococcus marenigrum (strain WH8102).